Consider the following 563-residue polypeptide: Arginine--tRNA ligase (563 aa).

The short motif at 121–131 (PNIAKPMSMGH) is the 'HIGH' region element.

This sequence belongs to the class-I aminoacyl-tRNA synthetase family. As to quaternary structure, monomer.

It localises to the cytoplasm. The catalysed reaction is tRNA(Arg) + L-arginine + ATP = L-arginyl-tRNA(Arg) + AMP + diphosphate. The protein is Arginine--tRNA ligase of Leuconostoc mesenteroides subsp. mesenteroides (strain ATCC 8293 / DSM 20343 / BCRC 11652 / CCM 1803 / JCM 6124 / NCDO 523 / NBRC 100496 / NCIMB 8023 / NCTC 12954 / NRRL B-1118 / 37Y).